We begin with the raw amino-acid sequence, 124 residues long: Large ribosomal subunit protein eL31 (124 aa).

Belongs to the eukaryotic ribosomal protein eL31 family.

This Spodoptera frugiperda (Fall armyworm) protein is Large ribosomal subunit protein eL31 (RpL31).